The primary structure comprises 457 residues: Hydrogenobyrinate a,c-diamide synthase (457 aa).

Positions 255–441 (TVAIAAGRAF…LHTHPAATPG (187 aa)) constitute a GATase cobBQ-type domain. Catalysis depends on Cys-337, which acts as the Nucleophile.

The protein belongs to the CobB/CbiA family. Mg(2+) serves as cofactor.

It carries out the reaction hydrogenobyrinate + 2 L-glutamine + 2 ATP + 2 H2O = hydrogenobyrinate a,c-diamide + 2 L-glutamate + 2 ADP + 2 phosphate + 2 H(+). The protein operates within cofactor biosynthesis; adenosylcobalamin biosynthesis; cob(II)yrinate a,c-diamide from precorrin-2 (aerobic route): step 9/10. Its function is as follows. Catalyzes the ATP-dependent amidation of the two carboxylate groups at positions a and c of hydrogenobyrinate, using either L-glutamine or ammonia as the nitrogen source. This Mycobacterium bovis (strain ATCC BAA-935 / AF2122/97) protein is Hydrogenobyrinate a,c-diamide synthase.